Reading from the N-terminus, the 726-residue chain is Catalase-peroxidase (726 aa).

The segment at 1–33 (MSTSDDIHNTTATGKCPFHQGGHDQSAGAGTTT) is disordered. Residues 105 to 226 (WHGAGTYRSI…LGATEMGLIY (122 aa)) constitute a cross-link (tryptophyl-tyrosyl-methioninium (Trp-Tyr) (with M-252)). His-106 serves as the catalytic Proton acceptor. The segment at residues 226–252 (YVNPEGPDHSGEPLSAAAAIRATFGNM) is a cross-link (tryptophyl-tyrosyl-methioninium (Tyr-Met) (with W-105)). Residue His-267 participates in heme b binding.

This sequence belongs to the peroxidase family. Peroxidase/catalase subfamily. As to quaternary structure, homodimer or homotetramer. The cofactor is heme b. In terms of processing, formation of the three residue Trp-Tyr-Met cross-link is important for the catalase, but not the peroxidase activity of the enzyme.

It carries out the reaction H2O2 + AH2 = A + 2 H2O. It catalyses the reaction 2 H2O2 = O2 + 2 H2O. Its function is as follows. Bifunctional enzyme with both catalase and broad-spectrum peroxidase activity. The chain is Catalase-peroxidase from Shigella flexneri.